The primary structure comprises 271 residues: Regulatory protein RecX (271 aa).

Belongs to the RecX family.

The protein localises to the cytoplasm. Functionally, modulates RecA activity. This Lactobacillus gasseri (strain ATCC 33323 / DSM 20243 / BCRC 14619 / CIP 102991 / JCM 1131 / KCTC 3163 / NCIMB 11718 / NCTC 13722 / AM63) protein is Regulatory protein RecX.